A 283-amino-acid polypeptide reads, in one-letter code: MSGTGQSHAADAAPDSDPGQAAVALAYQHFEPRAYLRNNYAPPRGDLSSPDGVGPWKLRCLAQTFATGEVSGRALIDIGSGPTIYQLLSACAHFEDITMTDFLEVNRQELGLWLREEPGAFDWSVYSQHVCLIEGKGESCQEKERQLRARVKRILPIDVHQPQPLGTGSLAPLPADALVSAFCLEAVSPDLASFQRALDHITTLLRSGGHLLLIGALEESWYLAGEARLAVVPVCEEEVREALARSGYEVRDLRTYVMPAHLRTGVDDVKGIFFAWAQKKVGV.

Phosphoserine is present on Ser-7. S-adenosyl-L-methionine-binding positions include Tyr-35, Tyr-40, 79–80 (GS), Tyr-85, Asp-101, Asn-106, 158–159 (DV), and Ala-181. Residues Glu-219 and Asp-267 each coordinate octopamine.

Belongs to the class I-like SAM-binding methyltransferase superfamily. NNMT/PNMT/TEMT family.

The enzyme catalyses phenylethanolamine + S-adenosyl-L-methionine = N-methylphenylethanolamine + S-adenosyl-L-homocysteine + H(+). It catalyses the reaction (R)-noradrenaline + S-adenosyl-L-methionine = (R)-adrenaline + S-adenosyl-L-homocysteine + H(+). It carries out the reaction (R)-normetanephrine + S-adenosyl-L-methionine = (R)-metanephrine + S-adenosyl-L-homocysteine + H(+). The catalysed reaction is (R)-octopamine + S-adenosyl-L-methionine = (R)-synephrine + S-adenosyl-L-homocysteine + H(+). It functions in the pathway catecholamine biosynthesis; (R)-adrenaline biosynthesis; (R)-adrenaline from (R)-noradrenaline: step 1/1. Functionally, catalyzes the transmethylation of nonepinephrine (noradrenaline) to form epinephrine (adrenaline), using S-adenosyl-L-methionine as the methyl donor. Other substrates include phenylethanolamine, octopamine and normetanephrine. In Sus scrofa (Pig), this protein is Phenylethanolamine N-methyltransferase (PNMT).